A 187-amino-acid polypeptide reads, in one-letter code: Elongation factor P (187 aa).

The protein belongs to the elongation factor P family.

The protein resides in the cytoplasm. It participates in protein biosynthesis; polypeptide chain elongation. Involved in peptide bond synthesis. Stimulates efficient translation and peptide-bond synthesis on native or reconstituted 70S ribosomes in vitro. Probably functions indirectly by altering the affinity of the ribosome for aminoacyl-tRNA, thus increasing their reactivity as acceptors for peptidyl transferase. The protein is Elongation factor P of Chromobacterium violaceum (strain ATCC 12472 / DSM 30191 / JCM 1249 / CCUG 213 / NBRC 12614 / NCIMB 9131 / NCTC 9757 / MK).